Reading from the N-terminus, the 322-residue chain is MTIKKIAVLTSGGDSQGMNAAVRAVVRSGLFYGLEVYGIQRGYQGLLNDDIFSMDLRSVGDIIQRGGTVLQSARCKEFMTPEGQQKGADILRKRGIDGLVVIGGDGSYHGANKLSKLGINTMALPGTIDNDISYTDFTIGFDTSVSIVVDAINKLRDTMSSHERSSIVEVMGRHCGDIALYAGLASGAETIIVPEVPFDMDEIAERMKQNFAHGKRHSIVVVAEGAGNGENVAKQLVERCETLEPRVTVLGHIQRGGTPTPADRNLASRLGDFAVRMLIAGESAKACGIISNELVLTDIDKVVNSKKEFNMELYELAARLSQ.

Glycine 13 contacts ATP. 23-27 lines the ADP pocket; sequence RAVVR. ATP contacts are provided by residues 74 to 75 and 104 to 107; these read RC and GDGS. Mg(2+) is bound at residue aspartate 105. 127-129 contacts substrate; it reads TID. Aspartate 129 serves as the catalytic Proton acceptor. Arginine 156 provides a ligand contact to ADP. Substrate contacts are provided by residues arginine 164 and 171 to 173; that span reads MGR. ADP contacts are provided by residues 187-189 and 215-217; these read GAE and KRH. Substrate is bound by residues glutamate 224, arginine 246, and 252–255; that span reads HIQR.

Belongs to the phosphofructokinase type A (PFKA) family. ATP-dependent PFK group I subfamily. Prokaryotic clade 'B1' sub-subfamily. As to quaternary structure, homotetramer. The cofactor is Mg(2+).

It is found in the cytoplasm. The catalysed reaction is beta-D-fructose 6-phosphate + ATP = beta-D-fructose 1,6-bisphosphate + ADP + H(+). The protein operates within carbohydrate degradation; glycolysis; D-glyceraldehyde 3-phosphate and glycerone phosphate from D-glucose: step 3/4. Its activity is regulated as follows. Allosterically activated by ADP and other diphosphonucleosides, and allosterically inhibited by phosphoenolpyruvate. In terms of biological role, catalyzes the phosphorylation of D-fructose 6-phosphate to fructose 1,6-bisphosphate by ATP, the first committing step of glycolysis. This chain is ATP-dependent 6-phosphofructokinase, found in Paenibacillus macquariensis (Bacillus macquariensis).